Consider the following 1758-residue polypeptide: Condensin-2 complex subunit hcp-6 (1758 aa).

Disordered stretches follow at residues 428 to 501, 969 to 1008, 1379 to 1460, and 1500 to 1656; these read DPGA…KAKE, ENGS…KGGM, QKRL…ARLL, and SKQA…LSRG. Positions 438–462 are enriched in acidic residues; the sequence is EQNEEEDEEEEGEDEEEEEENEQDD. Residues 463–473 show a composition bias toward basic and acidic residues; that stretch reads VAVKEEEQSDK. The span at 474–484 shows a compositional bias: acidic residues; that stretch reads SDEENDGDNEE. Over residues 485–501 the composition is skewed to basic and acidic residues; sequence NVSKKKEEKKKEKKAKE. The segment covering 969–979 has biased composition (polar residues); it reads ENGSSDASTVN. Residues 999–1008 show a composition bias toward low complexity; it reads SSQKSSKGGM. The stretch at 1326-1385 forms a coiled coil; it reads CIEHKNDIDEILQDNRQLKDEMMFELQRVKQRTEEANRILDEYLKRVAEFKKQQKRLSKS. The segment covering 1414–1423 has biased composition (acidic residues); that stretch reads EDQENVEEEV. Composition is skewed to basic and acidic residues over residues 1424–1437 and 1500–1512; these read EMRT…DADV and SKQA…KTIV. 2 stretches are compositionally biased toward polar residues: residues 1602–1618 and 1640–1651; these read ISAN…QSTE and VPTSSSGNTEND.

Component of the condensin-2 complex.

Its subcellular location is the nucleus. The protein resides in the chromosome. It localises to the centromere. Chromosomal protein which is recruited to mitotic chromosomes by hcp-3 (CENP-A) and hcp-4 (CENP-C). Involved in chromosome segregation during mitosis, playing a role in chromosome condensation and in maintaining chromosome morphology, rigidity and orientation during mitosis. The polypeptide is Condensin-2 complex subunit hcp-6 (Caenorhabditis elegans).